We begin with the raw amino-acid sequence, 150 residues long: Large ribosomal subunit protein uL11 (150 aa).

This sequence belongs to the universal ribosomal protein uL11 family. As to quaternary structure, part of the ribosomal stalk of the 50S ribosomal subunit. Interacts with L10 and the large rRNA to form the base of the stalk. L10 forms an elongated spine to which L12 dimers bind in a sequential fashion forming a multimeric L10(L12)X complex. One or more lysine residues are methylated.

Its function is as follows. Forms part of the ribosomal stalk which helps the ribosome interact with GTP-bound translation factors. This chain is Large ribosomal subunit protein uL11, found in Ureaplasma urealyticum serovar 10 (strain ATCC 33699 / Western).